A 309-amino-acid chain; its full sequence is Carbamate kinase-like protein (309 aa).

A disordered region spans residues 125 to 144 (NKPVGPFYNTEETARSANPN).

This sequence belongs to the carbamate kinase family.

This Mycoplasma pneumoniae (strain ATCC 29342 / M129 / Subtype 1) (Mycoplasmoides pneumoniae) protein is Carbamate kinase-like protein.